The chain runs to 515 residues: Maturase K (515 aa).

Belongs to the intron maturase 2 family. MatK subfamily.

It is found in the plastid. Its subcellular location is the chloroplast. In terms of biological role, usually encoded in the trnK tRNA gene intron. Probably assists in splicing its own and other chloroplast group II introns. This Cedrus atlantica (Atlas cedar) protein is Maturase K.